A 339-amino-acid chain; its full sequence is Anthranilate phosphoribosyltransferase (339 aa).

Residues G81, 84–85, S89, 91–94, 109–117, and A121 contribute to the 5-phospho-alpha-D-ribose 1-diphosphate site; these read GD, NVSS, and KHGNRALSS. G81 serves as a coordination point for anthranilate. S93 provides a ligand contact to Mg(2+). N112 is an anthranilate binding site. An anthranilate-binding site is contributed by R167. D225 and E226 together coordinate Mg(2+).

This sequence belongs to the anthranilate phosphoribosyltransferase family. Homodimer. The cofactor is Mg(2+).

It carries out the reaction N-(5-phospho-beta-D-ribosyl)anthranilate + diphosphate = 5-phospho-alpha-D-ribose 1-diphosphate + anthranilate. It participates in amino-acid biosynthesis; L-tryptophan biosynthesis; L-tryptophan from chorismate: step 2/5. Functionally, catalyzes the transfer of the phosphoribosyl group of 5-phosphorylribose-1-pyrophosphate (PRPP) to anthranilate to yield N-(5'-phosphoribosyl)-anthranilate (PRA). The polypeptide is Anthranilate phosphoribosyltransferase (Brucella suis biovar 1 (strain 1330)).